Reading from the N-terminus, the 191-residue chain is Thymidylate kinase (191 aa).

7–14 (GVDGAGKS) contributes to the ATP binding site.

This sequence belongs to the thymidylate kinase family.

It carries out the reaction dTMP + ATP = dTDP + ADP. Functionally, phosphorylation of dTMP to form dTDP in both de novo and salvage pathways of dTTP synthesis. This chain is Thymidylate kinase (tmk), found in Helicobacter pylori (strain ATCC 700392 / 26695) (Campylobacter pylori).